The primary structure comprises 103 residues: Large ribosomal subunit protein uL24 (103 aa).

Belongs to the universal ribosomal protein uL24 family. Part of the 50S ribosomal subunit.

In terms of biological role, one of two assembly initiator proteins, it binds directly to the 5'-end of the 23S rRNA, where it nucleates assembly of the 50S subunit. Its function is as follows. One of the proteins that surrounds the polypeptide exit tunnel on the outside of the subunit. The protein is Large ribosomal subunit protein uL24 of Sinorhizobium fredii (strain NBRC 101917 / NGR234).